Reading from the N-terminus, the 422-residue chain is Serine hydroxymethyltransferase (422 aa).

120 to 122 (GHI) contacts (6S)-5,6,7,8-tetrahydrofolate. Position 226 is an N6-(pyridoxal phosphate)lysine (Lys-226). Glu-241 contributes to the (6S)-5,6,7,8-tetrahydrofolate binding site.

It belongs to the SHMT family. As to quaternary structure, homodimer. Pyridoxal 5'-phosphate is required as a cofactor.

Its subcellular location is the cytoplasm. It carries out the reaction 5,10-methylenetetrahydromethanopterin + glycine + H2O = 5,6,7,8-tetrahydromethanopterin + L-serine. The protein operates within amino-acid biosynthesis; glycine biosynthesis; glycine from L-serine: step 1/1. Catalyzes the reversible interconversion of serine and glycine with tetrahydromethanopterin (H4MPT) serving as the one-carbon carrier. Also exhibits a pteridine-independent aldolase activity toward beta-hydroxyamino acids, producing glycine and aldehydes, via a retro-aldol mechanism. This Methanosphaera stadtmanae (strain ATCC 43021 / DSM 3091 / JCM 11832 / MCB-3) protein is Serine hydroxymethyltransferase.